Reading from the N-terminus, the 95-residue chain is TBK1 inhibitor DP96R (95 aa).

This sequence belongs to the asfivirus DP96R family.

Its function is as follows. Inhibits cGAS-STING-mediated type I IFN expression and NF-kB activation by inhibiting TBK1 and IKBKB/IKKB. Inhibits host TBK1 phosphorylation. In Ornithodoros (relapsing fever ticks), this protein is TBK1 inhibitor DP96R.